Reading from the N-terminus, the 384-residue chain is GTPase Obg (384 aa).

The region spanning 1-159 is the Obg domain; it reads MKFIDEAKIE…RSLQLELKVL (159 aa). The disordered stretch occupies residues 20–46; that stretch reads ATSFRREKFVPRGGPDGGDGGKGGSVW. Gly residues predominate over residues 33 to 43; that stretch reads GPDGGDGGKGG. The OBG-type G domain maps to 160-348; sequence ADVGLLGMPN…LVHQINQYLT (189 aa). Residues 166-173, 191-195, 213-216, 284-287, and 329-331 each bind GTP; these read GMPNAGKS, FTTLH, DIPG, NKLD, and SAL. Mg(2+) contacts are provided by serine 173 and threonine 193.

Belongs to the TRAFAC class OBG-HflX-like GTPase superfamily. OBG GTPase family. As to quaternary structure, monomer. Mg(2+) is required as a cofactor.

Its subcellular location is the cytoplasm. Functionally, an essential GTPase which binds GTP, GDP and possibly (p)ppGpp with moderate affinity, with high nucleotide exchange rates and a fairly low GTP hydrolysis rate. Plays a role in control of the cell cycle, stress response, ribosome biogenesis and in those bacteria that undergo differentiation, in morphogenesis control. The protein is GTPase Obg of Neisseria meningitidis serogroup C / serotype 2a (strain ATCC 700532 / DSM 15464 / FAM18).